Here is a 184-residue protein sequence, read N- to C-terminus: Large ribosomal subunit protein uL15 (184 aa).

The tract at residues 1–45 is disordered; sequence MDLSSLRPAKGAVKNKKRVGRGQGSGNGTTAGKGNNGQQSRSGYK. Residues 21–35 show a composition bias toward gly residues; sequence RGQGSGNGTTAGKGN.

This sequence belongs to the universal ribosomal protein uL15 family. Part of the 50S ribosomal subunit.

Functionally, binds to the 23S rRNA. The polypeptide is Large ribosomal subunit protein uL15 (Pelodictyon phaeoclathratiforme (strain DSM 5477 / BU-1)).